We begin with the raw amino-acid sequence, 887 residues long: DNA mismatch repair protein MutS (887 aa).

An ATP-binding site is contributed by 626-633 (GPNMAGKS).

Belongs to the DNA mismatch repair MutS family.

This protein is involved in the repair of mismatches in DNA. It is possible that it carries out the mismatch recognition step. This protein has a weak ATPase activity. The polypeptide is DNA mismatch repair protein MutS (Methanococcoides burtonii (strain DSM 6242 / NBRC 107633 / OCM 468 / ACE-M)).